The chain runs to 447 residues: GTPase Era, mitochondrial (447 aa).

The transit peptide at 1–18 (MTLRSCETFLRRSLRFST) directs the protein to the mitochondrion. One can recognise an Era-type G domain in the interval 109 to 340 (KSLKVAIVGS…RYLFVAAKPC (232 aa)). The tract at residues 117 to 124 (GSPNAGKS) is G1. 117-124 (GSPNAGKS) is a GTP binding site. The tract at residues 143-147 (HTTRS) is G2. The segment at 164-167 (DTPG) is G3. GTP contacts are provided by residues 164–168 (DTPGL) and 233–236 (NKVD). Positions 233-236 (NKVD) are G4. The G5 stretch occupies residues 318–320 (LSS). Positions 370-447 (LPKEVPYTMT…RLKISVKLRK (78 aa)) constitute a KH type-2 domain.

Belongs to the TRAFAC class TrmE-Era-EngA-EngB-Septin-like GTPase superfamily. Era GTPase family.

Its subcellular location is the mitochondrion matrix. It is found in the mitochondrion inner membrane. In terms of biological role, probable GTPase that plays a role in the mitochondrial ribosomal small subunit assembly. Specifically binds the 12S mitochondrial rRNA (12S mt-rRNA) to a 33 nucleotide section delineating the 3' terminal stem-loop region. May act as a chaperone that protects the 12S mt-rRNA on the 28S mitoribosomal subunit during ribosomal small subunit assembly. The chain is GTPase Era, mitochondrial (eral1) from Danio rerio (Zebrafish).